The primary structure comprises 128 residues: Fluoride-specific ion channel FluC (128 aa).

4 consecutive transmembrane segments (helical) span residues 5–25, 35–55, 67–87, and 96–116; these read IVAIFVGAGLGALLRWFLSLA, LGTLASNLIGGYVIGVAAVVF, LFVITGFLGGLTTFSTYSVEV, and FGWALAVAALHLTGSFALTAL. Na(+) is bound by residues Gly75 and Thr78.

This sequence belongs to the fluoride channel Fluc/FEX (TC 1.A.43) family.

The protein localises to the cell inner membrane. It catalyses the reaction fluoride(in) = fluoride(out). With respect to regulation, na(+) is not transported, but it plays an essential structural role and its presence is essential for fluoride channel function. Functionally, fluoride-specific ion channel. Important for reducing fluoride concentration in the cell, thus reducing its toxicity. In Burkholderia orbicola (strain MC0-3), this protein is Fluoride-specific ion channel FluC.